Reading from the N-terminus, the 212-residue chain is Nodulation protein NolU (212 aa).

Its function is as follows. Regulates cultivar-specific nodulation of soybean. The polypeptide is Nodulation protein NolU (nolU) (Rhizobium fredii (Sinorhizobium fredii)).